A 227-amino-acid chain; its full sequence is MMKEIPGPPTEAQIEDGRLLFAGECEFFFGSQKIDQLPPVGRPEVAFAGRSNVGKSSIINALTGRRALARASSEPGRTKQLNFFNLADRLSLVDMPGYGFAKAAKSVKEDWQDMMFAYLRGRTTLERVILLLDARIELKASDKDVMELLDRAAVVFQIVLTKCDQVKPKALAAKIAEVEALALKHAAAYPRIIATSSETGFGIEDLRAEIARFAVPLQTSGEGQSGS.

An EngB-type G domain is found at 41–216; that stretch reads GRPEVAFAGR…RAEIARFAVP (176 aa). Residues 49-56, 76-80, 94-97, 161-164, and 195-197 each bind GTP; these read GRSNVGKS, GRTKQ, DMPG, TKCD, and TSS. Mg(2+)-binding residues include serine 56 and threonine 78.

This sequence belongs to the TRAFAC class TrmE-Era-EngA-EngB-Septin-like GTPase superfamily. EngB GTPase family. Mg(2+) serves as cofactor.

Its function is as follows. Necessary for normal cell division and for the maintenance of normal septation. The sequence is that of Probable GTP-binding protein EngB from Gluconobacter oxydans (strain 621H) (Gluconobacter suboxydans).